Consider the following 508-residue polypeptide: ATP synthase subunit alpha, chloroplastic (508 aa).

Position 170–177 (170–177 (GDRQTGKT)) interacts with ATP.

Belongs to the ATPase alpha/beta chains family. F-type ATPases have 2 components, CF(1) - the catalytic core - and CF(0) - the membrane proton channel. CF(1) has five subunits: alpha(3), beta(3), gamma(1), delta(1), epsilon(1). CF(0) has four main subunits: a, b, b' and c.

It is found in the plastid. The protein localises to the chloroplast thylakoid membrane. The enzyme catalyses ATP + H2O + 4 H(+)(in) = ADP + phosphate + 5 H(+)(out). Functionally, produces ATP from ADP in the presence of a proton gradient across the membrane. The alpha chain is a regulatory subunit. The chain is ATP synthase subunit alpha, chloroplastic from Lactuca sativa (Garden lettuce).